A 238-amino-acid chain; its full sequence is Probable phosphatase phospho2 (238 aa).

Asp8 serves as the catalytic Nucleophile. 2 residues coordinate Mg(2+): Asp8 and Asp10. The Proton donor role is filled by Asp10. Substrate is bound by residues Asp19 and Asp99. A Mg(2+)-binding site is contributed by Asp179.

It belongs to the HAD-like hydrolase superfamily. PHOSPHO family. It depends on Mg(2+) as a cofactor.

Probable phosphatase. The protein is Probable phosphatase phospho2 (phospho2) of Xenopus tropicalis (Western clawed frog).